Consider the following 164-residue polypeptide: Large ribosomal subunit protein uL10 (164 aa).

The protein belongs to the universal ribosomal protein uL10 family. Part of the ribosomal stalk of the 50S ribosomal subunit. The N-terminus interacts with L11 and the large rRNA to form the base of the stalk. The C-terminus forms an elongated spine to which L12 dimers bind in a sequential fashion forming a multimeric L10(L12)X complex.

Its function is as follows. Forms part of the ribosomal stalk, playing a central role in the interaction of the ribosome with GTP-bound translation factors. This is Large ribosomal subunit protein uL10 (rplJ) from Helicobacter pylori (strain J99 / ATCC 700824) (Campylobacter pylori J99).